The following is a 373-amino-acid chain: MDFVQRFVIDRSFHLRYYSLDAYLYRAVDQVAWDADITHNRLFWDIWSAFMQPRSLVDAVETLSDYDPDEVAAAIEGMCESGIIEPVGLKDRQFDPLTVELSHVPQAWDYHLVSSRIDWINYLDGKDVKRQDLEQMDKHLSEEAVPSNFHKAANSRPKYDLPSLVPLTAFEFNNSASVAFGHEKAPLPNELSLDIITLLLNYAAAKTDTVNMYATGEHLRKAVPSGGARHPIEFYVVVGDEIAGIEAGVYHYNVRHHRLDAIEIASTSLKALQEASSVLPRSRSKPFGFAFIHTCRFERSMFRYREPRSYRVMQFDLGHIHANEVLAAKILGLDFSETFSVPESIVESVLTLDPFIESAMSAFVVHRHENHHD.

It to E.coli McbC which is involved in the processing of microcin B17 (MCCB17).

Its subcellular location is the cytoplasm. In terms of biological role, the actions of the proteins TfxB, TfxD and TfxF are implicated in the processing of the inactive trifolitoxin (TfxA) precursor into the active peptide. The polypeptide is Trifolitoxin-processing protein TfxB (tfxB) (Rhizobium leguminosarum bv. trifolii).